The following is a 69-amino-acid chain: Cold shock-like protein CspC (69 aa).

Residues 6-66 (GQVKWFNESK…GQKGPAAVNV (61 aa)) enclose the CSD domain.

The protein resides in the cytoplasm. This chain is Cold shock-like protein CspC (cspC), found in Buchnera aphidicola subsp. Acyrthosiphon pisum (strain APS) (Acyrthosiphon pisum symbiotic bacterium).